We begin with the raw amino-acid sequence, 122 residues long: Large ribosomal subunit protein uL14 (122 aa).

This sequence belongs to the universal ribosomal protein uL14 family. Part of the 50S ribosomal subunit. Forms a cluster with proteins L3 and L19. In the 70S ribosome, L14 and L19 interact and together make contacts with the 16S rRNA in bridges B5 and B8.

In terms of biological role, binds to 23S rRNA. Forms part of two intersubunit bridges in the 70S ribosome. The protein is Large ribosomal subunit protein uL14 of Rhodospirillum centenum (strain ATCC 51521 / SW).